We begin with the raw amino-acid sequence, 430 residues long: S-adenosylmethionine synthase (430 aa).

Position 14 (His14) interacts with ATP. Asp16 contacts Mg(2+). Position 42 (Glu42) interacts with K(+). L-methionine is bound by residues Glu55 and Gln98. The tract at residues 98 to 108 (QSADINRGVER) is flexible loop. Residues 164-166 (DAK), 254-255 (KF), Asp263, 269-270 (RK), Ala286, and Lys290 contribute to the ATP site. Asp263 contacts L-methionine. Lys294 is an L-methionine binding site.

The protein belongs to the AdoMet synthase family. Homotetramer; dimer of dimers. Mg(2+) serves as cofactor. The cofactor is K(+).

It is found in the cytoplasm. The enzyme catalyses L-methionine + ATP + H2O = S-adenosyl-L-methionine + phosphate + diphosphate. The protein operates within amino-acid biosynthesis; S-adenosyl-L-methionine biosynthesis; S-adenosyl-L-methionine from L-methionine: step 1/1. In terms of biological role, catalyzes the formation of S-adenosylmethionine (AdoMet) from methionine and ATP. The overall synthetic reaction is composed of two sequential steps, AdoMet formation and the subsequent tripolyphosphate hydrolysis which occurs prior to release of AdoMet from the enzyme. In Phocaeicola vulgatus (strain ATCC 8482 / DSM 1447 / JCM 5826 / CCUG 4940 / NBRC 14291 / NCTC 11154) (Bacteroides vulgatus), this protein is S-adenosylmethionine synthase.